The following is a 54-amino-acid chain: Large ribosomal subunit protein bL33C (54 aa).

It belongs to the bacterial ribosomal protein bL33 family.

The polypeptide is Large ribosomal subunit protein bL33C (rpmG3) (Streptomyces coelicolor (strain ATCC BAA-471 / A3(2) / M145)).